The following is a 487-amino-acid chain: Malonate-semialdehyde dehydrogenase (487 aa).

7 residues coordinate NAD(+): Ala150, Phe152, Lys176, Glu179, Arg180, Ser229, and Thr251. The active-site Nucleophile is Cys284. Glu382 is a binding site for NAD(+).

The protein belongs to the aldehyde dehydrogenase family. IolA subfamily. As to quaternary structure, homotetramer.

It catalyses the reaction 3-oxopropanoate + NAD(+) + CoA + H2O = hydrogencarbonate + acetyl-CoA + NADH + H(+). It carries out the reaction 2-methyl-3-oxopropanoate + NAD(+) + CoA + H2O = propanoyl-CoA + hydrogencarbonate + NADH + H(+). It participates in polyol metabolism; myo-inositol degradation into acetyl-CoA; acetyl-CoA from myo-inositol: step 7/7. Its function is as follows. Catalyzes the oxidation of malonate semialdehyde (MSA) and methylmalonate semialdehyde (MMSA) into acetyl-CoA and propanoyl-CoA, respectively. Is involved in a myo-inositol catabolic pathway. Bicarbonate, and not CO2, is the end-product of the enzymatic reaction. The chain is Malonate-semialdehyde dehydrogenase from Bacillus subtilis subsp. natto.